Reading from the N-terminus, the 338-residue chain is tRNA N6-adenosine threonylcarbamoyltransferase (338 aa).

His-111 and His-115 together coordinate Fe cation. Substrate contacts are provided by residues 134-138, Asp-167, Gly-180, and Asn-272; that span reads LVSGG. A Fe cation-binding site is contributed by Asp-300.

The protein belongs to the KAE1 / TsaD family. Requires Fe(2+) as cofactor.

Its subcellular location is the cytoplasm. It catalyses the reaction L-threonylcarbamoyladenylate + adenosine(37) in tRNA = N(6)-L-threonylcarbamoyladenosine(37) in tRNA + AMP + H(+). Functionally, required for the formation of a threonylcarbamoyl group on adenosine at position 37 (t(6)A37) in tRNAs that read codons beginning with adenine. Is involved in the transfer of the threonylcarbamoyl moiety of threonylcarbamoyl-AMP (TC-AMP) to the N6 group of A37, together with TsaE and TsaB. TsaD likely plays a direct catalytic role in this reaction. This is tRNA N6-adenosine threonylcarbamoyltransferase from Aliivibrio fischeri (strain MJ11) (Vibrio fischeri).